The primary structure comprises 269 residues: Thiazole synthase (269 aa).

Lysine 109 (schiff-base intermediate with DXP) is an active-site residue. Residues glycine 170, 196-197 (AG), and 218-219 (NT) each bind 1-deoxy-D-xylulose 5-phosphate.

The protein belongs to the ThiG family. Homotetramer. Forms heterodimers with either ThiH or ThiS.

The protein localises to the plastid. It localises to the chloroplast. The catalysed reaction is [ThiS sulfur-carrier protein]-C-terminal-Gly-aminoethanethioate + 2-iminoacetate + 1-deoxy-D-xylulose 5-phosphate = [ThiS sulfur-carrier protein]-C-terminal Gly-Gly + 2-[(2R,5Z)-2-carboxy-4-methylthiazol-5(2H)-ylidene]ethyl phosphate + 2 H2O + H(+). It participates in cofactor biosynthesis; thiamine diphosphate biosynthesis. Its function is as follows. Catalyzes the rearrangement of 1-deoxy-D-xylulose 5-phosphate (DXP) to produce the thiazole phosphate moiety of thiamine. Sulfur is provided by the thiocarboxylate moiety of the carrier protein ThiS. In vitro, sulfur can be provided by H(2)S. This Thalassiosira pseudonana (Marine diatom) protein is Thiazole synthase.